A 345-amino-acid chain; its full sequence is Isopentenyl-diphosphate delta-isomerase (345 aa).

A substrate-binding site is contributed by 6-7 (RK). FMN contacts are provided by residues 63–65 (SMT), serine 93, and asparagine 122. 93–95 (SQR) is a substrate binding site. Glutamine 156 lines the substrate pocket. Glutamate 157 is a Mg(2+) binding site. FMN is bound by residues lysine 188, threonine 218, 265–267 (GLR), and 286–287 (AL).

The protein belongs to the IPP isomerase type 2 family. As to quaternary structure, homooctamer. Dimer of tetramers. The cofactor is FMN. NADPH is required as a cofactor. It depends on Mg(2+) as a cofactor.

The protein localises to the cytoplasm. The catalysed reaction is isopentenyl diphosphate = dimethylallyl diphosphate. Involved in the biosynthesis of isoprenoids. Catalyzes the 1,3-allylic rearrangement of the homoallylic substrate isopentenyl (IPP) to its allylic isomer, dimethylallyl diphosphate (DMAPP). This chain is Isopentenyl-diphosphate delta-isomerase, found in Archaeoglobus fulgidus (strain ATCC 49558 / DSM 4304 / JCM 9628 / NBRC 100126 / VC-16).